The primary structure comprises 568 residues: Phosphoprotein (568 aa).

Residues 1–23 are disordered; that stretch reads MDQDALISKEDSEVEREASGGRE. Basic and acidic residues predominate over residues 7-20; it reads ISKEDSEVEREASG. The segment at 33–41 is N0 binding; the sequence is DAVLSSEPT. The segment at 54-317 is disordered; sequence INTLQRPGST…SPETDATKKG (264 aa). 3 stretches are compositionally biased toward basic and acidic residues: residues 99 to 110, 150 to 168, and 175 to 193; these read AEAHARNVDKQN, GAEDENREMAANPDKRGED, and EEIRRSAPLPDEREGRADN. Phosphoserine; by host occurs at positions 249, 257, and 260. The segment at 344 to 411 is multimerization; sequence FESSRDASYV…SFRDIYKRFS (68 aa). Positions 364-429 form a coiled coil; the sequence is YAEMAFNVCG…LLMSNLSTLH (66 aa). The tract at residues 412-445 is l protein binding; sequence EYQKEQNSLLMSNLSTLHIITDRGGKTDNPDSPT. The segment at 433–462 is disordered; sequence DRGGKTDNPDSPTRSPSVFAKTKENKTKAT. Residues Ser-447 and Ser-449 each carry the phosphoserine; by host modification. The segment covering 453-462 has biased composition (basic and acidic residues); the sequence is KTKENKTKAT. Positions 479-568 are interaction with the nucleocapsid (N-RNA); it reads DLLREDEFRE…VEEDIESLTN (90 aa).

This sequence belongs to the respirovirus P protein family. As to quaternary structure, homotetramer. Interacts (via multimerization domain) with polymerase L; this interaction forms the polymerase complex. Interacts (via N-terminus) with N0; this interaction allows P to chaperon N0 before encapsidation and form the N-P complex. Interacts (via C-terminus) with N-RNA template; this interaction positions the polymerase on the template. In terms of processing, phosphorylated by PKC/PRKCZ, and other unknown kinases. Phosphorylation is necessary for viral transcription and replication. The N-terminus contains the majority of phosphorylated sites. Ser-249 is the major site of phosphorylation, but is not necessary for most functions.

The protein localises to the host cytoplasm. Its function is as follows. Essential cofactor of the RNA polymerase L that plays a central role in the transcription and replication by forming the polymerase complex with RNA polymerase L and recruiting L to the genomic N-RNA template for RNA synthesis. Also plays a central role in the encapsidation of nascent RNA chains by forming the encapsidation complex with the nucleocapsid protein N (N-P complex). Acts as a chaperone for newly synthesized free N protein, so-called N0, allowing encapsidation of nascent RNA chains during replication. The nucleoprotein protein N prevents excessive phosphorylation of P, which leads to down-regulation of viral transcription/ replication. Participates, together with N, in the formation of viral factories (viroplasms), which are large inclusions in the host cytoplasm where replication takes place. Recruits host PI4KB and remodel the host endoplasmic reticulum membrane to form viral replication factories. The polypeptide is Phosphoprotein (P/V/C) (Sendai virus (strain Ohita) (SeV)).